Reading from the N-terminus, the 93-residue chain is Small ribosomal subunit protein uS19c (93 aa).

The protein belongs to the universal ribosomal protein uS19 family.

Its subcellular location is the plastid. It localises to the chloroplast. In terms of biological role, protein S19 forms a complex with S13 that binds strongly to the 16S ribosomal RNA. The chain is Small ribosomal subunit protein uS19c from Zygnema circumcarinatum (Green alga).